The primary structure comprises 539 residues: Heparanase-like protein 2 (539 aa).

The signal sequence occupies residues 1–21 (MGFNVVVFLSCLLLLPPVTFG). N-linked (GlcNAc...) asparagine glycosylation is found at N143, N163, and N181. E198 functions as the Proton donor in the catalytic mechanism. N300 carries an N-linked (GlcNAc...) asparagine glycan. E316 functions as the Nucleophile in the catalytic mechanism. N-linked (GlcNAc...) asparagine glycosylation is present at N421.

Belongs to the glycosyl hydrolase 79 family.

It localises to the lysosome membrane. The protein resides in the secreted. Its function is as follows. Endoglycosidase which is a cell surface and extracellular matrix-degrading enzyme. Cleaves heparan sulfate proteoglycans (HSPGs) into heparan sulfate side chains and core proteoglycans. The protein is Heparanase-like protein 2 of Arabidopsis thaliana (Mouse-ear cress).